The sequence spans 227 residues: ATP-dependent Clp protease proteolytic subunit (227 aa).

The Nucleophile role is filled by S123. The active site involves H148.

The protein belongs to the peptidase S14 family. Fourteen ClpP subunits assemble into 2 heptameric rings which stack back to back to give a disk-like structure with a central cavity, resembling the structure of eukaryotic proteasomes.

It localises to the cytoplasm. The enzyme catalyses Hydrolysis of proteins to small peptides in the presence of ATP and magnesium. alpha-casein is the usual test substrate. In the absence of ATP, only oligopeptides shorter than five residues are hydrolyzed (such as succinyl-Leu-Tyr-|-NHMec, and Leu-Tyr-Leu-|-Tyr-Trp, in which cleavage of the -Tyr-|-Leu- and -Tyr-|-Trp bonds also occurs).. Cleaves peptides in various proteins in a process that requires ATP hydrolysis. Has a chymotrypsin-like activity. Plays a major role in the degradation of misfolded proteins. The protein is ATP-dependent Clp protease proteolytic subunit of Chlorobium phaeobacteroides (strain DSM 266 / SMG 266 / 2430).